We begin with the raw amino-acid sequence, 139 residues long: ATP synthase epsilon chain, chloroplastic (139 aa).

Belongs to the ATPase epsilon chain family. In terms of assembly, F-type ATPases have 2 components, CF(1) - the catalytic core - and CF(0) - the membrane proton channel. CF(1) has five subunits: alpha(3), beta(3), gamma(1), delta(1), epsilon(1). CF(0) has three main subunits: a, b and c.

The protein resides in the plastid. The protein localises to the chloroplast thylakoid membrane. In terms of biological role, produces ATP from ADP in the presence of a proton gradient across the membrane. The sequence is that of ATP synthase epsilon chain, chloroplastic from Dictyota dichotoma.